Consider the following 189-residue polypeptide: MVPNLDLETAIQIISSLETQLSELEGATKEYENDLEQVISKLKSDLLESQQQNKCNKKQITDLEIQVDELENENIQLRNKIETLQLESDRRLERNVLLEHELLDTKEALQKLRVSKEEATSGETRRNTRSLPSQNKKMKLFKDTIKVSTTSSTLYLQNMAKTNNAARSHCNIPNTQITQSTVIATTSSV.

Positions Asn4–Ser121 form a coiled coil. Residues Val114–Arg126 show a composition bias toward basic and acidic residues. Residues Val114–Lys139 form a disordered region.

It belongs to the nudE family. Self-associates. Interacts with PAC1.

It localises to the nucleus. The protein localises to the cytoplasm. The protein resides in the cytoskeleton. Its function is as follows. Required for nuclear migration to the bud neck during cell division. Targets cytoplasmic dynein to microtubule plus ends thereby promoting dynein-mediated microtubule sliding along the bud cortex and consequently the movement of the mitotic spindle to the bud neck. This chain is Nuclear distribution protein nudE homolog 1 (NDL1), found in Saccharomyces cerevisiae (strain ATCC 204508 / S288c) (Baker's yeast).